We begin with the raw amino-acid sequence, 449 residues long: Phosphoribosylamine--glycine ligase (449 aa).

The ATP-grasp domain maps to 112–325 (RELMEKYDIP…IVTLHASIAE (214 aa)). ATP is bound at residue 139-202 (IDELGKPVAV…EEKCVGEEYT (64 aa)). Residues Gln-283, Glu-295, and Asn-297 each coordinate Mg(2+). Mn(2+) contacts are provided by Gln-283, Glu-295, and Asn-297.

Belongs to the GARS family. The cofactor is Mg(2+). Mn(2+) is required as a cofactor.

The catalysed reaction is 5-phospho-beta-D-ribosylamine + glycine + ATP = N(1)-(5-phospho-beta-D-ribosyl)glycinamide + ADP + phosphate + H(+). Its pathway is purine metabolism; IMP biosynthesis via de novo pathway; N(1)-(5-phospho-D-ribosyl)glycinamide from 5-phospho-alpha-D-ribose 1-diphosphate: step 2/2. The chain is Phosphoribosylamine--glycine ligase from Methanopyrus kandleri (strain AV19 / DSM 6324 / JCM 9639 / NBRC 100938).